Here is an 875-residue protein sequence, read N- to C-terminus: Transcription factor tenR (875 aa).

The segment at residues 16–44 (CSECRRRKIRCDRGFPCGPCRKSLPALSC) is a DNA-binding region (zn(2)-C6 fungal-type). Disordered stretches follow at residues 54 to 73 (AASA…PKVN), 136 to 172 (DHEK…GVNP), and 620 to 642 (PHED…TGSR). 2 stretches are compositionally biased toward polar residues: residues 153-168 (PGST…SHSA) and 627-642 (SIQS…TGSR).

Its subcellular location is the nucleus. Transcription factor that positively regulates the expression of the genes that mediate the biosynthesis of tenellin-type 2-pyridones, iron-chelating compounds involved in iron stress tolerance, competition with the natural competitor fungus Metarhizium robertsii and insect hosts infection. This is Transcription factor tenR from Beauveria bassiana (strain ARSEF 2860) (White muscardine disease fungus).